Reading from the N-terminus, the 377-residue chain is Dehydrogenase/reductase SDR family member 13 (377 aa).

A signal peptide spans 1–25 (MEALLLGAGLLLGAYVLVYYNLVKA). Residues Ser46 and Ile48 each coordinate NAD(+). Ser170 is a binding site for substrate. Tyr197, Lys201, and Ser232 together coordinate NAD(+). Tyr197 serves as the catalytic Proton acceptor. The tract at residues 309–377 (RLAGLGPGED…AKVEPEIQLS (69 aa)) is disordered. Residues 317-331 (EDAEPDEDPQSEDSE) are compositionally biased toward acidic residues. A compositionally biased stretch (low complexity) spans 347 to 357 (SQPYPSPQSSP). Residues 368-377 (AKVEPEIQLS) are compositionally biased toward basic and acidic residues.

This sequence belongs to the short-chain dehydrogenases/reductases (SDR) family.

It localises to the secreted. Its function is as follows. Putative oxidoreductase. This chain is Dehydrogenase/reductase SDR family member 13, found in Homo sapiens (Human).